A 299-amino-acid chain; its full sequence is uncharacterized protein (299 aa).

Positions 1 to 20 (MTTKHELVINTNEPSAPNAD) are disordered. Residues 172–192 (SFFIPPMVVISTPICLGLTVF) traverse the membrane as a helical segment.

Belongs to the IIV-6 259R family.

It localises to the membrane. This is an uncharacterized protein from Acheta domesticus (House cricket).